Reading from the N-terminus, the 136-residue chain is Flagellar basal-body rod protein FlgC (136 aa).

The protein belongs to the flagella basal body rod proteins family. The basal body constitutes a major portion of the flagellar organelle and consists of four rings (L,P,S, and M) mounted on a central rod. The rod consists of about 26 subunits of FlgG in the distal portion, and FlgB, FlgC and FlgF are thought to build up the proximal portion of the rod with about 6 subunits each.

Its subcellular location is the bacterial flagellum basal body. The protein is Flagellar basal-body rod protein FlgC (flgC) of Buchnera aphidicola subsp. Baizongia pistaciae (strain Bp).